Here is a 412-residue protein sequence, read N- to C-terminus: Early growth response protein 2b (412 aa).

The disordered stretch occupies residues 269 to 299 (YTPQNLPLRPILRPRKYPNRPSKTPVHERPY). 3 consecutive C2H2-type zinc fingers follow at residues 299-323 (YPCPAEGCDRRFSRSDELTRHIRIH), 329-351 (FQCRICMRNFSRSDHLTTHIRTH), and 357-379 (FACDFCGRKFARSDERKRHTKIH). A disordered region spans residues 371–412 (ERKRHTKIHLRQKERKSSSSSTGVSSSERGVATSICSSSSNQ). The segment covering 374–384 (RHTKIHLRQKE) has biased composition (basic residues). Positions 388–401 (SSSSTGVSSSERGV) are enriched in low complexity.

It belongs to the EGR C2H2-type zinc-finger protein family.

It localises to the nucleus. Functionally, sequence-specific DNA-binding transcription factor. Binds to two specific DNA sites located in the promoter region of HOXA4. This chain is Early growth response protein 2b (egr2b), found in Danio rerio (Zebrafish).